The following is an 817-amino-acid chain: Nuclear hormone receptor family member nhr-48 (817 aa).

Residues 49 to 91 (YNDDKDDPFYEDEGSGGGTSGGGKKSSRKRANTTSSSGGNEKE) form a disordered region. Residues 52 to 62 (DKDDPFYEDEG) show a composition bias toward acidic residues. The segment covering 63 to 72 (SGGGTSGGGK) has biased composition (gly residues). A DNA-binding region (nuclear receptor) is located at residues 97–172 (NKVCRVCGDK…VGMKKEWIMS (76 aa)). 2 NR C4-type zinc fingers span residues 100-120 (CRVCGDKAFSYNFNVITCESC) and 136-155 (CPFNEQCEINMVSRRFCQRC). Acidic residues predominate over residues 202-212 (ACMEDESENSY). Disordered stretches follow at residues 202-221 (ACMEDESENSYDEAPAPSHQ) and 258-284 (MNFYQDGPSDQGDYSLPSNSCASSSQL). Positions 273 to 284 (LPSNSCASSSQL) are enriched in polar residues.

The protein belongs to the nuclear hormone receptor family.

The protein resides in the nucleus. In terms of biological role, orphan nuclear receptor. The chain is Nuclear hormone receptor family member nhr-48 (nhr-48) from Caenorhabditis elegans.